Reading from the N-terminus, the 416-residue chain is MIKKSALITLFLVSLILGVSLSQKPFYCQAPEPTPSLNTDGLTLKMVQILTRHGDRTPLYSTLKPTMNTWDCNLGWLMVSSLNNVPGAATDVDRLFRKVYMPNREYFPGNCSDGQLTSLGFQQHLQLGQSLRQLYVDKYELLPSELSVDAASTIWVRSTDVPRTIQSVQGHLTALFPPTTVTSGSGIPIININTMDNYYENMTPNPTLCPELAVLIANTTTTPEWGEFITNTTQLKEDVMETLGISVFPGWSSLMDLFFATQCHDFPLPEGVTQDMVTQVYEAAYWQYQYQLSFPMIARLGMSTFLEEVVDNIRAFVNGTSSVKYIVFSGHDDSVGPFTNLFGLMKEWPPYASHVELELWSDEKDNYFLQFKFNGQSYTLNGCEDVMCPIDSFFETAYSILVPNYADACSNSTMTF.

The first 22 residues, 1 to 22 (MIKKSALITLFLVSLILGVSLS), serve as a signal peptide directing secretion. 5 N-linked (GlcNAc...) asparagine glycosylation sites follow: Asn110, Asn218, Asn231, Asn318, and Asn411.

This sequence belongs to the histidine acid phosphatase family. In terms of assembly, component of the counting factor (CF) complex, which includes cf60, cf50, cf45-1 and ctnA.

Its subcellular location is the secreted. In terms of biological role, cell-counting factor that limits the maximum size of the multicellular structure. Does not possess acid phosphatase activity. Cells with decreased levels of this protein form large groups while cells overexpressing this protein form small groups. The protein is Counting factor 60 (cf60) of Dictyostelium discoideum (Social amoeba).